Consider the following 197-residue polypeptide: Pyridoxal 5'-phosphate synthase subunit PdxT (197 aa).

Residue 52–54 (GES) coordinates L-glutamine. The Nucleophile role is filled by Cys84. Residues Arg116 and 143–144 (IR) contribute to the L-glutamine site. Catalysis depends on charge relay system residues His179 and Glu181.

The protein belongs to the glutaminase PdxT/SNO family. In terms of assembly, in the presence of PdxS, forms a dodecamer of heterodimers. Only shows activity in the heterodimer.

It catalyses the reaction aldehydo-D-ribose 5-phosphate + D-glyceraldehyde 3-phosphate + L-glutamine = pyridoxal 5'-phosphate + L-glutamate + phosphate + 3 H2O + H(+). The enzyme catalyses L-glutamine + H2O = L-glutamate + NH4(+). It functions in the pathway cofactor biosynthesis; pyridoxal 5'-phosphate biosynthesis. Catalyzes the hydrolysis of glutamine to glutamate and ammonia as part of the biosynthesis of pyridoxal 5'-phosphate. The resulting ammonia molecule is channeled to the active site of PdxS. The protein is Pyridoxal 5'-phosphate synthase subunit PdxT of Ignicoccus hospitalis (strain KIN4/I / DSM 18386 / JCM 14125).